Here is a 400-residue protein sequence, read N- to C-terminus: Betaine--homocysteine S-methyltransferase 1 (400 aa).

Residues 8–309 (RGVLERLNAG…YHIRAVAEEL (302 aa)) form the Hcy-binding domain. Residues Cys-212, Cys-294, and Cys-295 each coordinate Zn(2+).

Homotetramer. It depends on Zn(2+) as a cofactor.

It localises to the cytoplasm. The catalysed reaction is L-homocysteine + glycine betaine = N,N-dimethylglycine + L-methionine. The protein operates within amine and polyamine degradation; betaine degradation; sarcosine from betaine: step 1/2. It participates in amino-acid biosynthesis; L-methionine biosynthesis via de novo pathway; L-methionine from L-homocysteine (BhmT route): step 1/1. In terms of biological role, involved in the regulation of homocysteine metabolism. Converts betaine and homocysteine to dimethylglycine and methionine, respectively. This reaction is also required for the irreversible oxidation of choline. The sequence is that of Betaine--homocysteine S-methyltransferase 1 (bhmt) from Danio rerio (Zebrafish).